Consider the following 252-residue polypeptide: Imidazole glycerol phosphate synthase subunit HisF (252 aa).

Residues Asp-11 and Asp-130 contribute to the active site.

It belongs to the HisA/HisF family. In terms of assembly, heterodimer of HisH and HisF.

It is found in the cytoplasm. The catalysed reaction is 5-[(5-phospho-1-deoxy-D-ribulos-1-ylimino)methylamino]-1-(5-phospho-beta-D-ribosyl)imidazole-4-carboxamide + L-glutamine = D-erythro-1-(imidazol-4-yl)glycerol 3-phosphate + 5-amino-1-(5-phospho-beta-D-ribosyl)imidazole-4-carboxamide + L-glutamate + H(+). Its pathway is amino-acid biosynthesis; L-histidine biosynthesis; L-histidine from 5-phospho-alpha-D-ribose 1-diphosphate: step 5/9. Its function is as follows. IGPS catalyzes the conversion of PRFAR and glutamine to IGP, AICAR and glutamate. The HisF subunit catalyzes the cyclization activity that produces IGP and AICAR from PRFAR using the ammonia provided by the HisH subunit. The sequence is that of Imidazole glycerol phosphate synthase subunit HisF from Thermococcus kodakarensis (strain ATCC BAA-918 / JCM 12380 / KOD1) (Pyrococcus kodakaraensis (strain KOD1)).